Consider the following 143-residue polypeptide: Ribosome-binding factor A (143 aa).

A compositionally biased stretch (basic and acidic residues) spans Ser-116–Gln-128. A disordered region spans residues Ser-116–Asp-143.

Belongs to the RbfA family. Monomer. Binds 30S ribosomal subunits, but not 50S ribosomal subunits or 70S ribosomes.

The protein localises to the cytoplasm. Functionally, one of several proteins that assist in the late maturation steps of the functional core of the 30S ribosomal subunit. Associates with free 30S ribosomal subunits (but not with 30S subunits that are part of 70S ribosomes or polysomes). Required for efficient processing of 16S rRNA. May interact with the 5'-terminal helix region of 16S rRNA. The chain is Ribosome-binding factor A from Shewanella sediminis (strain HAW-EB3).